A 294-amino-acid chain; its full sequence is tRNA pseudouridine synthase B (294 aa).

Residue D40 is the Nucleophile of the active site.

It belongs to the pseudouridine synthase TruB family. Type 1 subfamily.

The catalysed reaction is uridine(55) in tRNA = pseudouridine(55) in tRNA. Functionally, responsible for synthesis of pseudouridine from uracil-55 in the psi GC loop of transfer RNAs. This is tRNA pseudouridine synthase B from Synechococcus elongatus (strain ATCC 33912 / PCC 7942 / FACHB-805) (Anacystis nidulans R2).